Reading from the N-terminus, the 859-residue chain is DNA-directed RNA polymerase subunit Rpo1C (859 aa).

The protein belongs to the RNA polymerase beta' chain family. In terms of assembly, part of the RNA polymerase complex. In terms of processing, this protein undergoes a protein self splicing that involves a post-translational excision of the intervening region (intein) followed by peptide ligation.

The protein localises to the cytoplasm. It catalyses the reaction RNA(n) + a ribonucleoside 5'-triphosphate = RNA(n+1) + diphosphate. Functionally, DNA-dependent RNA polymerase (RNAP) catalyzes the transcription of DNA into RNA using the four ribonucleoside triphosphates as substrates. Forms part of the jaw domain. This chain is DNA-directed RNA polymerase subunit Rpo1C, found in Methanocaldococcus jannaschii (strain ATCC 43067 / DSM 2661 / JAL-1 / JCM 10045 / NBRC 100440) (Methanococcus jannaschii).